The primary structure comprises 211 residues: Vascular-related unknown protein 1 (211 aa).

The segment covering 1 to 12 (MMDTFSCNSYEQ) has biased composition (polar residues). Residues 1-40 (MMDTFSCNSYEQNHPHDDDIDIDAHDHDSHGGDHQEESGW) form a disordered region. Positions 13–37 (NHPHDDDIDIDAHDHDSHGGDHQEE) are enriched in basic and acidic residues.

As to expression, expressed in vascular tissues of cotyledons, rosette leaves, sepals, petals, anther filaments. Expressed in roots, inflorescence stems and developing seeds.

Its subcellular location is the cytoplasm. The protein localises to the nucleus. Its function is as follows. Involved in the regulation of xylem development and growth. May regulate secondary wall formation during vascular development by modulation of brassinosteroid, gibberellin and auxin hormone signaling pathways. This chain is Vascular-related unknown protein 1, found in Arabidopsis thaliana (Mouse-ear cress).